We begin with the raw amino-acid sequence, 161 residues long: uncharacterized protein (161 aa).

The helical transmembrane segment at 16 to 36 (KLGLVVAIFFFMMGTTVVVLY) threads the bilayer.

The protein resides in the membrane. This is an uncharacterized protein from Encephalitozoon cuniculi (strain GB-M1) (Microsporidian parasite).